We begin with the raw amino-acid sequence, 32 residues long: Periplasmic [NiFeSe] hydrogenase small subunit (32 aa).

Cys18 and Cys21 together coordinate [4Fe-4S] cluster.

It belongs to the [NiFe]/[NiFeSe] hydrogenase small subunit family. Heterodimer of a large and a small subunit. [3Fe-4S] cluster serves as cofactor. It depends on [4Fe-4S] cluster as a cofactor.

Its subcellular location is the periplasm. It catalyses the reaction H2 + A = AH2. This Desulfomicrobium norvegicum (strain DSM 1741 / NCIMB 8310) (Desulfovibrio baculatus (strain Norway 4)) protein is Periplasmic [NiFeSe] hydrogenase small subunit.